The chain runs to 240 residues: Biosynthetic peptidoglycan transglycosylase (240 aa).

The helical transmembrane segment at 12 to 31 (ALMWFMVGSVLLVLLLRFVP) threads the bilayer.

This sequence belongs to the glycosyltransferase 51 family.

It is found in the cell inner membrane. The catalysed reaction is [GlcNAc-(1-&gt;4)-Mur2Ac(oyl-L-Ala-gamma-D-Glu-L-Lys-D-Ala-D-Ala)](n)-di-trans,octa-cis-undecaprenyl diphosphate + beta-D-GlcNAc-(1-&gt;4)-Mur2Ac(oyl-L-Ala-gamma-D-Glu-L-Lys-D-Ala-D-Ala)-di-trans,octa-cis-undecaprenyl diphosphate = [GlcNAc-(1-&gt;4)-Mur2Ac(oyl-L-Ala-gamma-D-Glu-L-Lys-D-Ala-D-Ala)](n+1)-di-trans,octa-cis-undecaprenyl diphosphate + di-trans,octa-cis-undecaprenyl diphosphate + H(+). It participates in cell wall biogenesis; peptidoglycan biosynthesis. Its function is as follows. Peptidoglycan polymerase that catalyzes glycan chain elongation from lipid-linked precursors. The protein is Biosynthetic peptidoglycan transglycosylase of Pseudomonas fluorescens (strain ATCC BAA-477 / NRRL B-23932 / Pf-5).